A 146-amino-acid polypeptide reads, in one-letter code: Ribonuclease VapC41 (146 aa).

Residues 3–142 form the PINc domain; it reads LCDTNIWLAL…FTQYGGIELR (140 aa). Residues aspartate 5 and aspartate 112 each coordinate Mg(2+).

Belongs to the PINc/VapC protein family. Mg(2+) is required as a cofactor.

Functionally, toxic component of a type II toxin-antitoxin (TA) system. An RNase. Its toxic effect is neutralized by coexpression with cognate antitoxin VapB41. In Mycobacterium tuberculosis (strain CDC 1551 / Oshkosh), this protein is Ribonuclease VapC41.